The chain runs to 926 residues: DNA mismatch repair protein MutS (926 aa).

Residues Met1–Gln67 are disordered. Composition is skewed to polar residues over residues Gln18–Ser44 and Lys57–Gln67. Gly726–Ser733 provides a ligand contact to ATP.

The protein belongs to the DNA mismatch repair MutS family.

In terms of biological role, this protein is involved in the repair of mismatches in DNA. It is possible that it carries out the mismatch recognition step. This protein has a weak ATPase activity. The protein is DNA mismatch repair protein MutS of Prochlorococcus marinus (strain NATL1A).